We begin with the raw amino-acid sequence, 402 residues long: NADH-quinone oxidoreductase subunit D (402 aa).

Belongs to the complex I 49 kDa subunit family. In terms of assembly, NDH-1 is composed of 14 different subunits. Subunits NuoB, C, D, E, F, and G constitute the peripheral sector of the complex.

The protein resides in the cell inner membrane. The catalysed reaction is a quinone + NADH + 5 H(+)(in) = a quinol + NAD(+) + 4 H(+)(out). Its function is as follows. NDH-1 shuttles electrons from NADH, via FMN and iron-sulfur (Fe-S) centers, to quinones in the respiratory chain. The immediate electron acceptor for the enzyme in this species is believed to be ubiquinone. Couples the redox reaction to proton translocation (for every two electrons transferred, four hydrogen ions are translocated across the cytoplasmic membrane), and thus conserves the redox energy in a proton gradient. The protein is NADH-quinone oxidoreductase subunit D of Cereibacter sphaeroides (strain ATCC 17025 / ATH 2.4.3) (Rhodobacter sphaeroides).